Here is a 1073-residue protein sequence, read N- to C-terminus: MLGDGKEGTSTIPGFNQIQFEGFYRFIDQGLIEEVSKFPKIEDIDQEIEFQLFVETYQLVEPLRKERDAVYESLTYSSELYVSAGLIWKTSRKMQEQRIFIGNIPLMNSLGTSIVNGIYRIVINQILQSPGIYYQSELDHNGISVYTGTIISDWGGRLELEIDKKARIWARVSRKQKISILVLSSAMGSNLREILENVCYPEIFLSFLTDKEKKKIGSKENAILEFYQQFSCVGGDPIFSESLCKELQKKFFHQRCELGRIGRRNINWRLNLTIPQNNIFLLPRDILAAADHLIGMKFGMGTLDDMNHLKNKRIRSVADLLQDQFGLALARLENVVKGTICGAIKHKLIPTPQNLVTATPLTTTYESFFGLHPLSQVLDRTNPLTQIVHGRKLSYLGPGGLTGRTANFRIRDIHPSHYGRICPIDTSEGINVGLIGSLAIHARIGDWGSLESPFYELFEKSKKARIRMLFLSPSQDEYYMIAAGNSLALNRGIQEEQAVPARYRQEFLTIAWEEVHLRSIFPFQYFSIGASLIPFIEHNDANRALMSSNMQRQAVPLSRSEKCIVGTGLERQVALDSGVPAIAEQEGKILYTDTKKIILSGNGDNTLGIPLIMYQRSNKNTCMHQKSQVRRGKCIKKGQILADGAATVGGELALGKNILVAYMPWEGYNFEDAVLISECLVYGDIYTSFHIRKYEIQTHVTTQGPERITKEIPHLEGHLLRNLDKNGIVMLGSWVETGDILVGKLTPQVAKESSYAPEDRLLRAILGIQVSTSKETCLKLPIGGRGRVIDVGWVQKKGGSSYNPEKIRVYISQKREIKVGDKVAGRHGNKGIISKILPRQDMPYLQDGRPVDMVFNPLGVPSRMNVGQIFECSLGLAGSLLDRHYRIAPFDERYEQEASRKLVFSELYEASKQTANPWVFEPEYPGKSRIFDGRTGDPFEQPVIIGKPYILKLIHQVDDKIHGRSSGHYALVTQQPLRGRSKQGGQRVGEMEVWALEGFGVAHILQEMLTYKSDHIRARQEVLGTTIVGGTIPKPEDAPESFRLLVRELRSLALDLNHFLVSEKNFQINRKEV.

The protein belongs to the RNA polymerase beta chain family. In terms of assembly, in plastids the minimal PEP RNA polymerase catalytic core is composed of four subunits: alpha, beta, beta', and beta''. When a (nuclear-encoded) sigma factor is associated with the core the holoenzyme is formed, which can initiate transcription.

It is found in the plastid. Its subcellular location is the chloroplast. The catalysed reaction is RNA(n) + a ribonucleoside 5'-triphosphate = RNA(n+1) + diphosphate. In terms of biological role, DNA-dependent RNA polymerase catalyzes the transcription of DNA into RNA using the four ribonucleoside triphosphates as substrates. This is DNA-directed RNA polymerase subunit beta from Aethionema grandiflorum (Persian stone-cress).